The chain runs to 273 residues: Glutamate 5-kinase (273 aa).

Residue Lys15 coordinates ATP. Substrate contacts are provided by Ser55, Asp142, and Asn158. ATP-binding positions include 178-179 (SD) and 220-226 (TGGMLSK).

The protein belongs to the glutamate 5-kinase family.

It is found in the cytoplasm. The enzyme catalyses L-glutamate + ATP = L-glutamyl 5-phosphate + ADP. The protein operates within amino-acid biosynthesis; L-proline biosynthesis; L-glutamate 5-semialdehyde from L-glutamate: step 1/2. Catalyzes the transfer of a phosphate group to glutamate to form L-glutamate 5-phosphate. The protein is Glutamate 5-kinase of Streptococcus pyogenes serotype M2 (strain MGAS10270).